A 236-amino-acid polypeptide reads, in one-letter code: MINNQESLRSQTFFCIKYIISLSFFFILIYQLLNFLVLRPYAEYLWNHYQTDVFLNSSQEERIFAKLQNFEEEMQFDMLISYTYPLNPQVLHKEMEEKAFELAHMSNNESINSIAHVFTDLLIAFLIFCLLINAKKEIAIIQTYIDQYIYSLTDAKKSFFLILFTDIFVGFHSSHGWKILIELCLTHLGLPENKGFIFLFVATFPVILDTLFKYWIFLYLNRISPSAVATFNNMNE.

Transmembrane regions (helical) follow at residues 18-38, 114-134, 161-181, and 196-216; these read YIISLSFFFILIYQLLNFLVL, IAHVFTDLLIAFLIFCLLINA, LILFTDIFVGFHSSHGWKILI, and FIFLFVATFPVILDTLFKYWI.

It belongs to the CemA family.

It localises to the plastid. The protein localises to the chloroplast inner membrane. The enzyme catalyses K(+)(in) + H(+)(out) = K(+)(out) + H(+)(in). Contributes to K(+)/H(+) antiport activity by supporting proton efflux to control proton extrusion and homeostasis in chloroplasts in a light-dependent manner to modulate photosynthesis. Prevents excessive induction of non-photochemical quenching (NPQ) under continuous-light conditions. Indirectly promotes efficient inorganic carbon uptake into chloroplasts. This is Potassium/proton antiporter CemA from Mesostigma viride (Green alga).